An 86-amino-acid chain; its full sequence is U15-lycotoxin-Ls1d (86 aa).

An N-terminal signal peptide occupies residues 1-20 (MNSKIFAVLLLLAFLSCVLS). A WAP domain is found at 21-66 (DQYCPKSSITACKKMNIRNDCCKDDDCTGGSWCCATPCGNFCKYPT). 5 disulfide bridges follow: C24–C54, C32–C58, C41–C53, C42–C80, and C47–C62.

Belongs to the venom protein 11 family. 01 (wap-1) subfamily. Contains 5 disulfide bonds. As to expression, expressed by the venom gland.

The protein localises to the secreted. In terms of biological role, has antibacterial activity. In Lycosa singoriensis (Wolf spider), this protein is U15-lycotoxin-Ls1d.